The primary structure comprises 221 residues: uncharacterized protein (221 aa).

The first 23 residues, 1–23 (MNKLIQLALFFTLMLTGCSNSST), serve as a signal peptide directing secretion. The tract at residues 67-221 (ELGKRKAKEE…QGYIDPEDAP (155 aa)) is disordered. The span at 68–150 (LGKRKAKEEA…EQKANAEKKR (83 aa)) shows a compositional bias: basic and acidic residues. The stretch at 70–161 (KRKAKEEAEK…SQAQRQQTEA (92 aa)) forms a coiled coil. The span at 152-161 (SQAQRQQTEA) shows a compositional bias: polar residues. Over residues 162–174 (PSSNSQDPPSSSS) the composition is skewed to low complexity. The span at 175–184 (QTDKTIQQPA) shows a compositional bias: polar residues. A compositionally biased stretch (basic and acidic residues) spans 195 to 205 (YEERKKWHDDQ).

This is an uncharacterized protein from Bacillus subtilis (strain 168).